The sequence spans 626 residues: Probable potassium transport system protein Kup 3 (626 aa).

The next 12 membrane-spanning stretches (helical) occupy residues 10 to 30 (LATLTLAALGVVYGDIGTSPL), 51 to 71 (VLGILSLFFWSLIIVVTLKYV), 107 to 127 (VLLGLFGAALFYGDGIITPAI), 141 to 161 (PAFKPYILPITLITLIGLFIF), 173 to 193 (FGPVMVIWFAVIAVLGAAAIV), 216 to 236 (LLGFFALGAVVLCITGGEALY), 251 to 271 (WLGYVLPALLLNYFGQGALLL), 293 to 313 (LVALATVATVIASQAVISGAF), 341 to 361 (IYLPAINWMMLIAIIALVIEF), 371 to 391 (YGIAVTGTMLITNILAIAVAV), 401 to 421 (AMLGALPFICIDLGFFLANSV), and 423 to 443 (IADGGWFPLAFGLAVFILLTT).

This sequence belongs to the HAK/KUP transporter (TC 2.A.72) family.

It localises to the cell inner membrane. The enzyme catalyses K(+)(in) + H(+)(in) = K(+)(out) + H(+)(out). Transport of potassium into the cell. Likely operates as a K(+):H(+) symporter. This is Probable potassium transport system protein Kup 3 from Dechloromonas aromatica (strain RCB).